The sequence spans 446 residues: Indoleacetamide hydrolase (446 aa).

Catalysis depends on charge relay system residues lysine 71 and serine 146. Serine 170 (acyl-ester intermediate) is an active-site residue.

It belongs to the amidase family.

It functions in the pathway plant hormone metabolism; auxin biosynthesis. In terms of biological role, hydrolyzes indole-3-acetamide (IAM) into indole-3-acetic acid (IAA). This Pseudomonas syringae pv. syringae protein is Indoleacetamide hydrolase (iaaH).